The primary structure comprises 240 residues: ATP-dependent dethiobiotin synthetase BioD 1 (240 aa).

13 to 18 (DVGKTV) contacts ATP. Residue Thr17 participates in Mg(2+) binding. Residue Lys38 is part of the active site. Ser42 provides a ligand contact to substrate. Residues Asp55, 116-119 (EGAG), 176-177 (NE), 205-207 (PYL), and Glu212 each bind ATP. Positions 55 and 116 each coordinate Mg(2+).

This sequence belongs to the dethiobiotin synthetase family. Homodimer. The cofactor is Mg(2+).

The protein resides in the cytoplasm. It catalyses the reaction (7R,8S)-7,8-diammoniononanoate + CO2 + ATP = (4R,5S)-dethiobiotin + ADP + phosphate + 3 H(+). It functions in the pathway cofactor biosynthesis; biotin biosynthesis; biotin from 7,8-diaminononanoate: step 1/2. In terms of biological role, catalyzes a mechanistically unusual reaction, the ATP-dependent insertion of CO2 between the N7 and N8 nitrogen atoms of 7,8-diaminopelargonic acid (DAPA, also called 7,8-diammoniononanoate) to form a ureido ring. This chain is ATP-dependent dethiobiotin synthetase BioD 1, found in Yersinia pestis.